The primary structure comprises 274 residues: Cytochrome b-c1 complex subunit Rieske, mitochondrial (274 aa).

Topologically, residues Ser79 to Ser103 are mitochondrial matrix. A helical transmembrane segment spans residues Lys104 to Met140. At Ser141 to Gly274 the chain is on the mitochondrial intermembrane side. The Rieske domain maps to Glu187–Ile272. Cys217, His219, Cys236, His239, and Ser241 together coordinate [2Fe-2S] cluster. The cysteines at positions 222 and 238 are disulfide-linked.

It belongs to the Rieske iron-sulfur protein family. As to quaternary structure, component of the ubiquinol-cytochrome c oxidoreductase (cytochrome b-c1 complex, complex III, CIII), a multisubunit enzyme composed of 11 subunits. The complex is composed of 3 respiratory subunits cytochrome b, cytochrome c1 and Rieske protein UQCRFS1, 2 core protein subunits UQCRC1/QCR1 and UQCRC2/QCR2, and 6 low-molecular weight protein subunits UQCRH/QCR6, UQCRB/QCR7, UQCRQ/QCR8, UQCR10/QCR9, UQCR11/QCR10 and subunit 9, the cleavage product of Rieske protein UQCRFS1. The complex exists as an obligatory dimer and forms supercomplexes (SCs) in the inner mitochondrial membrane with NADH-ubiquinone oxidoreductase (complex I, CI) and cytochrome c oxidase (complex IV, CIV), resulting in different assemblies (supercomplex SCI(1)III(2)IV(1) and megacomplex MCI(2)III(2)IV(2)). Incorporation of the Rieske protein UQCRFS1 is the penultimate step in complex III assembly. Interacts with TTC19, which is involved in the clearance of UQCRFS1 fragments. In terms of assembly, component of the ubiquinol-cytochrome c oxidoreductase (cytochrome b-c1 complex, complex III, CIII). Subunit 9 corresponds to the mitochondrial targeting sequence (MTS) of Rieske protein UQCRFS1. It is retained after processing and incorporated inside complex III, where it remains bound to the complex and localizes between the 2 core subunits UQCRC1/QCR1 and UQCRC2/QCR2. The cofactor is [2Fe-2S] cluster. Post-translationally, proteolytic processing is necessary for the correct insertion of UQCRFS1 in the complex III dimer. Several fragments are generated during UQCRFS1 insertion, most probably due to the endogenous matrix-processing peptidase (MPP) activity of the 2 core protein subunits UQCRC1/QCR1 and UQCRC2/QCR2, which are homologous to the 2 mitochondrial-processing peptidase (MPP) subunits beta-MPP and alpha-MPP respectively. The action of the protease is also necessary for the clearance of the UQCRFS1 fragments.

The protein localises to the mitochondrion inner membrane. The catalysed reaction is a quinol + 2 Fe(III)-[cytochrome c](out) = a quinone + 2 Fe(II)-[cytochrome c](out) + 2 H(+)(out). Functionally, component of the ubiquinol-cytochrome c oxidoreductase, a multisubunit transmembrane complex that is part of the mitochondrial electron transport chain which drives oxidative phosphorylation. The respiratory chain contains 3 multisubunit complexes succinate dehydrogenase (complex II, CII), ubiquinol-cytochrome c oxidoreductase (cytochrome b-c1 complex, complex III, CIII) and cytochrome c oxidase (complex IV, CIV), that cooperate to transfer electrons derived from NADH and succinate to molecular oxygen, creating an electrochemical gradient over the inner membrane that drives transmembrane transport and the ATP synthase. The cytochrome b-c1 complex catalyzes electron transfer from ubiquinol to cytochrome c, linking this redox reaction to translocation of protons across the mitochondrial inner membrane, with protons being carried across the membrane as hydrogens on the quinol. In the process called Q cycle, 2 protons are consumed from the matrix, 4 protons are released into the intermembrane space and 2 electrons are passed to cytochrome c. The Rieske protein is a catalytic core subunit containing a [2Fe-2S] iron-sulfur cluster. It cycles between 2 conformational states during catalysis to transfer electrons from the quinol bound in the Q(0) site in cytochrome b to cytochrome c1. Incorporation of UQCRFS1 is the penultimate step in complex III assembly. Its function is as follows. Component of the ubiquinol-cytochrome c oxidoreductase (cytochrome b-c1 complex, complex III, CIII). UQCRFS1 undergoes proteolytic processing once it is incorporated in the complex III dimer. One of the fragments, called subunit 9, corresponds to its mitochondrial targeting sequence (MTS). The proteolytic processing is necessary for the correct insertion of UQCRFS1 in the complex III dimer, but the persistence of UQCRFS1-derived fragments may prevent newly imported UQCRFS1 to be processed and assembled into complex III and is detrimental for the complex III structure and function. The polypeptide is Cytochrome b-c1 complex subunit Rieske, mitochondrial (UQCRFS1) (Bos taurus (Bovine)).